Here is a 1406-residue protein sequence, read N- to C-terminus: Carboxypeptidase D (1406 aa).

The signal sequence occupies residues 1–25 (MPTLGLLFASIGIAVLAMGVPHCRG). At 26–1312 (YTIKEDESFL…VNEHVFGLPR (1287 aa)) the chain is on the extracellular side. Peptidase M14 domains are found at residues 39–335 (HYAS…LRQA) and 455–760 (EHHN…IEQV). H101 and E104 together coordinate Zn(2+). Residue N133 is glycosylated (N-linked (GlcNAc...) asparagine). 3 disulfide bridges follow: C156–C309, C236–C237, and C268–C308. H217 contacts Zn(2+). N269 is a glycosylation site (N-linked (GlcNAc...) asparagine). The active-site Proton donor/acceptor is the E305. An N-linked (GlcNAc...) asparagine glycan is attached at N458. Positions 517 and 520 each coordinate Zn(2+). 2 N-linked (GlcNAc...) asparagine glycosylation sites follow: N549 and N612. Residue H626 participates in Zn(2+) binding. N652 is a glycosylation site (N-linked (GlcNAc...) asparagine). E730 acts as the Proton donor/acceptor in catalysis. N-linked (GlcNAc...) asparagine glycosylation is found at N787, N808, N981, N1152, and N1251. The Peptidase M14 3 domain occupies 863-1121 (RYHTNPQVRA…DKIKNFLALV (259 aa)). A helical transmembrane segment spans residues 1313-1333 (FLFILCASVLIIVGVIVCVLC). Over 1334–1406 (AQFWFYRRHR…TNYSFIIQAA (73 aa)) the chain is Cytoplasmic. Residues 1343-1345 (RGD) carry the Cell attachment site motif. Position 1380 is a phosphoserine (S1380).

This sequence belongs to the peptidase M14 family. As to quaternary structure, monomer. Zn(2+) is required as a cofactor. In terms of tissue distribution, expressed in the central nervous system (CNS) of adults and larvae. In the adult brain, increased levels of expression in the mushroom body (MB) and neurosecretory cells.

Its subcellular location is the membrane. It is found in the cytoplasm. It localises to the perinuclear region. The protein resides in the golgi apparatus. The protein localises to the trans-Golgi network. Its subcellular location is the secreted. The enzyme catalyses Releases C-terminal Arg and Lys from polypeptides.. Inhibited by 2-guanidinoethylmercaptosuccinic acid (GEMSA). In terms of biological role, metallocarboxypeptidase that catalyzes the release of C-terminal arginine or lysine residues from peptides and proteins. Functionally important for processing a broad range of proteins including growth factors, peptide hormones (such as Akh) and neuropeptides. Consequently, it is involved in a wide range of processes including viability, memory formation, locomotive activity, wing formation, and peptide-regulated behaviors such as starvation-induced hyperactivity, appetitive gustatory preference, and cold and ethanol sensitivity. Key enzyme in neuropeptide processing. Involved in regulation of memory formation, possibly via the insulin pathway in neurosecretory cells. This chain is Carboxypeptidase D, found in Drosophila melanogaster (Fruit fly).